The chain runs to 426 residues: 3-phosphoshikimate 1-carboxyvinyltransferase (426 aa).

Residues lysine 22, serine 23, and arginine 27 each contribute to the 3-phosphoshikimate site. Lysine 22 contributes to the phosphoenolpyruvate binding site. Residues glycine 96 and arginine 124 each contribute to the phosphoenolpyruvate site. Serine 170, serine 171, glutamine 172, serine 198, aspartate 314, asparagine 337, and lysine 341 together coordinate 3-phosphoshikimate. Phosphoenolpyruvate is bound at residue glutamine 172. Catalysis depends on aspartate 314, which acts as the Proton acceptor. Arginine 345, arginine 387, and lysine 412 together coordinate phosphoenolpyruvate.

It belongs to the EPSP synthase family. In terms of assembly, monomer.

It localises to the cytoplasm. The enzyme catalyses 3-phosphoshikimate + phosphoenolpyruvate = 5-O-(1-carboxyvinyl)-3-phosphoshikimate + phosphate. The protein operates within metabolic intermediate biosynthesis; chorismate biosynthesis; chorismate from D-erythrose 4-phosphate and phosphoenolpyruvate: step 6/7. Functionally, catalyzes the transfer of the enolpyruvyl moiety of phosphoenolpyruvate (PEP) to the 5-hydroxyl of shikimate-3-phosphate (S3P) to produce enolpyruvyl shikimate-3-phosphate and inorganic phosphate. This Shewanella baltica (strain OS195) protein is 3-phosphoshikimate 1-carboxyvinyltransferase.